Consider the following 332-residue polypeptide: MEQKYSLLSHNTFGIDVSAACFLEYASVDELRGLIGSGRVTSPYLHIGGGSNLLFTKDYEGTILHSRIGGVEVVAETDDDIVVRVGAGVVWDDFVDYCVQRHWHGVENLSLIPGEVGASAVQNIGAYGVEVKDLIVRVETLNIEGKEHVYDVTECGYSYRDSIFKRPENKSVFVTYVSFRLSKREHYTLDYGTIRRELEKYPGVTLDVVRRVIIAIREEKLPDPRVMGNAGSFFMNPIVGREQFEALQAEYPQMPFYEIDTDRVKIPAGWMIDQCGWKGKALGPAAVHDKQALVLVNRGGAKGADVIALSDAVRASVRAKFGIDIHPEVNFI.

Positions 15-184 constitute an FAD-binding PCMH-type domain; sequence IDVSAACFLE…TYVSFRLSKR (170 aa). Arg160 is a catalytic residue. Residue Ser232 is the Proton donor of the active site. The active site involves Glu328.

Belongs to the MurB family. FAD is required as a cofactor.

The protein localises to the cytoplasm. The enzyme catalyses UDP-N-acetyl-alpha-D-muramate + NADP(+) = UDP-N-acetyl-3-O-(1-carboxyvinyl)-alpha-D-glucosamine + NADPH + H(+). The protein operates within cell wall biogenesis; peptidoglycan biosynthesis. Functionally, cell wall formation. In Bacteroides fragilis (strain ATCC 25285 / DSM 2151 / CCUG 4856 / JCM 11019 / LMG 10263 / NCTC 9343 / Onslow / VPI 2553 / EN-2), this protein is UDP-N-acetylenolpyruvoylglucosamine reductase.